Reading from the N-terminus, the 82-residue chain is DNA-directed RNA polymerase subunit Rpo5 (82 aa).

This sequence belongs to the archaeal Rpo5/eukaryotic RPB5 RNA polymerase subunit family. Part of the RNA polymerase complex.

Its subcellular location is the cytoplasm. It carries out the reaction RNA(n) + a ribonucleoside 5'-triphosphate = RNA(n+1) + diphosphate. Functionally, DNA-dependent RNA polymerase (RNAP) catalyzes the transcription of DNA into RNA using the four ribonucleoside triphosphates as substrates. This is DNA-directed RNA polymerase subunit Rpo5 from Pyrococcus abyssi (strain GE5 / Orsay).